We begin with the raw amino-acid sequence, 134 residues long: Putative pre-16S rRNA nuclease (134 aa).

This sequence belongs to the YqgF nuclease family.

The protein localises to the cytoplasm. Functionally, could be a nuclease involved in processing of the 5'-end of pre-16S rRNA. This Helicobacter pylori (strain P12) protein is Putative pre-16S rRNA nuclease.